The primary structure comprises 509 residues: Maturase K (509 aa).

The protein belongs to the intron maturase 2 family. MatK subfamily.

It is found in the plastid. Its subcellular location is the chloroplast. Its function is as follows. Usually encoded in the trnK tRNA gene intron. Probably assists in splicing its own and other chloroplast group II introns. In Thuja occidentalis (Northern white-cedar), this protein is Maturase K.